Reading from the N-terminus, the 468-residue chain is Phosphoglucosamine mutase (468 aa).

The Phosphoserine intermediate role is filled by S112. 4 residues coordinate Mg(2+): S112, D254, D256, and D258. S112 is modified (phosphoserine).

It belongs to the phosphohexose mutase family. Mg(2+) serves as cofactor. Activated by phosphorylation.

It carries out the reaction alpha-D-glucosamine 1-phosphate = D-glucosamine 6-phosphate. Catalyzes the conversion of glucosamine-6-phosphate to glucosamine-1-phosphate. This chain is Phosphoglucosamine mutase, found in Prochlorococcus marinus (strain MIT 9313).